The primary structure comprises 462 residues: Elongation factor 1-alpha, somatic form (462 aa).

Position 2 is a n,N,N-trimethylglycine (Gly2). The region spanning Lys5–Thr242 is the tr-type G domain. Residues Gly14 to Ser21 are G1. Gly14–Ser21 serves as a coordination point for GTP. The segment at Gly70–Asp74 is G2. The G3 stretch occupies residues Asp91–Gly94. GTP contacts are provided by residues Asp91–His95 and Asn153–Asp156. The interval Asn153 to Asp156 is G4. A G5 region spans residues Ser194–Trp196. 5-glutamyl glycerylphosphorylethanolamine occurs at positions 301 and 374.

Belongs to the TRAFAC class translation factor GTPase superfamily. Classic translation factor GTPase family. EF-Tu/EF-1A subfamily.

The protein localises to the cytoplasm. Functionally, this protein promotes the GTP-dependent binding of aminoacyl-tRNA to the A-site of ribosomes during protein biosynthesis. This is Elongation factor 1-alpha, somatic form (eef1as) from Xenopus laevis (African clawed frog).